The following is a 243-amino-acid chain: Probable transcriptional regulatory protein LGAS_1276 (243 aa).

Residues 1–22 are disordered; the sequence is MSGHSKWHNIQGRKNAQDAKRG.

It belongs to the TACO1 family.

It is found in the cytoplasm. The polypeptide is Probable transcriptional regulatory protein LGAS_1276 (Lactobacillus gasseri (strain ATCC 33323 / DSM 20243 / BCRC 14619 / CIP 102991 / JCM 1131 / KCTC 3163 / NCIMB 11718 / NCTC 13722 / AM63)).